We begin with the raw amino-acid sequence, 156 residues long: ATP synthase subunit b (156 aa).

The helical transmembrane segment at Ile7–Pro27 threads the bilayer.

Belongs to the ATPase B chain family. In terms of assembly, F-type ATPases have 2 components, F(1) - the catalytic core - and F(0) - the membrane proton channel. F(1) has five subunits: alpha(3), beta(3), gamma(1), delta(1), epsilon(1). F(0) has three main subunits: a(1), b(2) and c(10-14). The alpha and beta chains form an alternating ring which encloses part of the gamma chain. F(1) is attached to F(0) by a central stalk formed by the gamma and epsilon chains, while a peripheral stalk is formed by the delta and b chains.

It localises to the cell inner membrane. Functionally, f(1)F(0) ATP synthase produces ATP from ADP in the presence of a proton or sodium gradient. F-type ATPases consist of two structural domains, F(1) containing the extramembraneous catalytic core and F(0) containing the membrane proton channel, linked together by a central stalk and a peripheral stalk. During catalysis, ATP synthesis in the catalytic domain of F(1) is coupled via a rotary mechanism of the central stalk subunits to proton translocation. Its function is as follows. Component of the F(0) channel, it forms part of the peripheral stalk, linking F(1) to F(0). The sequence is that of ATP synthase subunit b from Bordetella pertussis (strain Tohama I / ATCC BAA-589 / NCTC 13251).